We begin with the raw amino-acid sequence, 372 residues long: N-acetyllactosaminide beta-1,3-N-acetylglucosaminyltransferase 3 (372 aa).

At 1–10 (MKYLRHRRPN) the chain is on the cytoplasmic side. A helical; Signal-anchor for type II membrane protein transmembrane segment spans residues 11 to 31 (ATLILAIGAFTLLLFSLLVSP). Topologically, residues 32–372 (PTCKVQEQPP…LTCGNQTQIY (341 aa)) are lumenal. 5 N-linked (GlcNAc...) asparagine glycosylation sites follow: asparagine 64, asparagine 184, asparagine 202, asparagine 362, and asparagine 367.

The protein belongs to the glycosyltransferase 31 family. In terms of tissue distribution, expressed in colon, jejunum, stomach, esophagus, placenta and trachea.

The protein localises to the golgi apparatus membrane. It catalyses the reaction a 3-O-{beta-D-galactosyl-(1-&gt;3)-[N-acetyl-beta-D-glucosaminyl-(1-&gt;6)]-N-acetyl-alpha-D-galactosaminyl}-L-threonyl-[protein] + UDP-N-acetyl-alpha-D-glucosamine = 3-O-{beta-D-GlcNAc-(1-&gt;3)-beta-D-Gal-(1-&gt;3)-[beta-D-GlcNAc-(1-&gt;6)]-alpha-D-GalNAc}-L-threonyl-[protein] + UDP + H(+). The catalysed reaction is 3-O-{beta-D-galactosyl-(1-&gt;3)-[N-acetyl-beta-D-glucosaminyl-(1-&gt;6)]-N-acetyl-alpha-D-galactosaminyl}-L-seryl-[protein] + UDP-N-acetyl-alpha-D-glucosamine = 3-O-{beta-D-GlcNAc-(1-&gt;3)-beta-D-Gal-(1-&gt;3)-[beta-D-GlcNAc-(1-&gt;6)]-alpha-D-GalNAc}-L-seryl-[protein] + UDP + H(+). The enzyme catalyses a beta-D-galactosyl-(1-&gt;4)-N-acetyl-beta-D-glucosaminyl derivative + UDP-N-acetyl-alpha-D-glucosamine = an N-acetyl-beta-D-glucosaminyl-(1-&gt;3)-beta-D-galactosyl-(1-&gt;4)-N-acetyl-beta-D-glucosaminyl derivative + UDP + H(+). It participates in protein modification; protein glycosylation. Its function is as follows. Beta-1,3-N-acetylglucosaminyltransferase involved in the synthesis of poly-N-acetyllactosamine. Has activity for type 2 oligosaccharides. Also acts as a core1-1,3-N-acetylglucosaminyltransferase (Core1-beta3GlcNAcT) to form the 6-sulfo sialyl Lewis x on extended core1 O-glycans. This is N-acetyllactosaminide beta-1,3-N-acetylglucosaminyltransferase 3 (B3GNT3) from Homo sapiens (Human).